A 241-amino-acid chain; its full sequence is Carboxy-S-adenosyl-L-methionine synthase (241 aa).

S-adenosyl-L-methionine-binding positions include Tyr38, 63–65 (GCS), 88–89 (DN), 116–117 (DI), Asn131, and Arg198.

This sequence belongs to the class I-like SAM-binding methyltransferase superfamily. Cx-SAM synthase family. Homodimer.

It carries out the reaction prephenate + S-adenosyl-L-methionine = carboxy-S-adenosyl-L-methionine + 3-phenylpyruvate + H2O. Its function is as follows. Catalyzes the conversion of S-adenosyl-L-methionine (SAM) to carboxy-S-adenosyl-L-methionine (Cx-SAM). The polypeptide is Carboxy-S-adenosyl-L-methionine synthase (Actinobacillus pleuropneumoniae serotype 3 (strain JL03)).